We begin with the raw amino-acid sequence, 258 residues long: Imidazole glycerol phosphate synthase subunit HisF (258 aa).

Active-site residues include Asp12 and Asp131.

The protein belongs to the HisA/HisF family. In terms of assembly, heterodimer of HisH and HisF.

It localises to the cytoplasm. The catalysed reaction is 5-[(5-phospho-1-deoxy-D-ribulos-1-ylimino)methylamino]-1-(5-phospho-beta-D-ribosyl)imidazole-4-carboxamide + L-glutamine = D-erythro-1-(imidazol-4-yl)glycerol 3-phosphate + 5-amino-1-(5-phospho-beta-D-ribosyl)imidazole-4-carboxamide + L-glutamate + H(+). Its pathway is amino-acid biosynthesis; L-histidine biosynthesis; L-histidine from 5-phospho-alpha-D-ribose 1-diphosphate: step 5/9. In terms of biological role, IGPS catalyzes the conversion of PRFAR and glutamine to IGP, AICAR and glutamate. The HisF subunit catalyzes the cyclization activity that produces IGP and AICAR from PRFAR using the ammonia provided by the HisH subunit. In Corynebacterium diphtheriae (strain ATCC 700971 / NCTC 13129 / Biotype gravis), this protein is Imidazole glycerol phosphate synthase subunit HisF.